The sequence spans 414 residues: Histidine--tRNA ligase (414 aa).

Belongs to the class-II aminoacyl-tRNA synthetase family. Homodimer.

It is found in the cytoplasm. It carries out the reaction tRNA(His) + L-histidine + ATP = L-histidyl-tRNA(His) + AMP + diphosphate + H(+). This chain is Histidine--tRNA ligase (hisS), found in Mycoplasma genitalium (strain ATCC 33530 / DSM 19775 / NCTC 10195 / G37) (Mycoplasmoides genitalium).